Consider the following 798-residue polypeptide: PR domain zinc finger protein 4 (798 aa).

The region spanning 408–525 is the SET domain; that stretch reads KQLVLRQSIV…PENELLFYYS (118 aa). 5 C2H2-type zinc fingers span residues 586 to 608, 614 to 636, 642 to 664, 670 to 692, and 698 to 720; these read WKCS…FMGH, HKCD…LKIH, YRCT…MVIH, LKCD…VLIH, and IKCP…LNSH. Residues 726-747 form a C2H2-type 6; degenerate zinc finger; that stretch reads YVCEKCTKAYLTKYHLTRHLKA. The disordered stretch occupies residues 750–798; sequence EPASSSSAQDDEDEDGDSGEDGLPGSMTTEGCRMSSAVYSADESLSAHK. Residues 758 to 769 are compositionally biased toward acidic residues; it reads QDDEDEDGDSGE.

This sequence belongs to the class V-like SAM-binding methyltransferase superfamily.

It is found in the nucleus. May function as a transcription factor involved in cell differentiation. This is PR domain zinc finger protein 4 (Prdm4) from Rattus norvegicus (Rat).